The sequence spans 398 residues: Phosphoglycerate kinase (398 aa).

Substrate is bound by residues 21–23 (DFN), Arg-36, 59–62 (HLGR), Arg-119, and Arg-157. Residues Lys-208, Gly-296, Glu-327, and 354–357 (GGDS) contribute to the ATP site.

The protein belongs to the phosphoglycerate kinase family. As to quaternary structure, monomer.

Its subcellular location is the cytoplasm. The catalysed reaction is (2R)-3-phosphoglycerate + ATP = (2R)-3-phospho-glyceroyl phosphate + ADP. It functions in the pathway carbohydrate degradation; glycolysis; pyruvate from D-glyceraldehyde 3-phosphate: step 2/5. The protein is Phosphoglycerate kinase of Streptococcus agalactiae serotype III (strain NEM316).